Reading from the N-terminus, the 40-residue chain is Snaclec LmrLEC-1 (40 aa).

A disulfide bridge links Cys-2 with Cys-13.

The protein belongs to the snaclec family. In terms of assembly, dimer (non-covalently linked) of heterodimers of subunits alpha and beta (disulfide-linked). Expressed by the venom gland.

It is found in the secreted. Interferes with one step of hemostasis (modulation of platelet aggregation, or coagulation cascade, for example). The chain is Snaclec LmrLEC-1 from Lachesis muta rhombeata (Bushmaster).